The following is a 314-amino-acid chain: MEKRNLTVVREFVLLGLPSSAEQQHLLSVLFLCMYLATTLGNMLIIATIGFDSHLHSPMYFFLSNLAFVDICFTSTTVPQMVVNILTGTKTISFAGCLTQLFFFVSFVNMDSLLLCVMAYDRYVAICHPLHYTARMNLCLCVQLVAGLWLVTYLHALLHTVLIAQLSFCASNIIHHFFCDLNPLLQLSCSDVSFNVMIIFAVGGLLALTPLVCILVSYGLIFSTVLKITSTQGKQRAVSTCSCHLSVVVLFYGTAIAVYFSPSSPHMPESDTLSTIMYSMVAPMLNPFIYTLRNRDMKRGLQKMLLKCTVFQQQ.

The Extracellular segment spans residues 1–25 (MEKRNLTVVREFVLLGLPSSAEQQH). A helical membrane pass occupies residues 26–49 (LLSVLFLCMYLATTLGNMLIIATI). The Cytoplasmic segment spans residues 50-57 (GFDSHLHS). A helical transmembrane segment spans residues 58–79 (PMYFFLSNLAFVDICFTSTTVP). The Extracellular portion of the chain corresponds to 80–100 (QMVVNILTGTKTISFAGCLTQ). Cys-97 and Cys-189 form a disulfide bridge. The helical transmembrane segment at 101 to 120 (LFFFVSFVNMDSLLLCVMAY) threads the bilayer. Residues 121–139 (DRYVAICHPLHYTARMNLC) are Cytoplasmic-facing. A helical transmembrane segment spans residues 140 to 158 (LCVQLVAGLWLVTYLHALL). The Extracellular portion of the chain corresponds to 159–195 (HTVLIAQLSFCASNIIHHFFCDLNPLLQLSCSDVSFN). The chain crosses the membrane as a helical span at residues 196 to 219 (VMIIFAVGGLLALTPLVCILVSYG). Topologically, residues 220–236 (LIFSTVLKITSTQGKQR) are cytoplasmic. A helical membrane pass occupies residues 237 to 259 (AVSTCSCHLSVVVLFYGTAIAVY). Residues 260 to 272 (FSPSSPHMPESDT) are Extracellular-facing. A helical membrane pass occupies residues 273–292 (LSTIMYSMVAPMLNPFIYTL). Topologically, residues 293 to 314 (RNRDMKRGLQKMLLKCTVFQQQ) are cytoplasmic.

It belongs to the G-protein coupled receptor 1 family.

The protein localises to the cell membrane. Odorant receptor. This is Olfactory receptor 1C1 (OR1C1) from Homo sapiens (Human).